We begin with the raw amino-acid sequence, 410 residues long: 2,3-bisphosphoglycerate-independent phosphoglycerate mutase (410 aa).

It belongs to the BPG-independent phosphoglycerate mutase family. A-PGAM subfamily.

It catalyses the reaction (2R)-2-phosphoglycerate = (2R)-3-phosphoglycerate. The protein operates within carbohydrate degradation; glycolysis; pyruvate from D-glyceraldehyde 3-phosphate: step 3/5. Functionally, catalyzes the interconversion of 2-phosphoglycerate and 3-phosphoglycerate. This Pyrococcus abyssi (strain GE5 / Orsay) protein is 2,3-bisphosphoglycerate-independent phosphoglycerate mutase.